The chain runs to 125 residues: MPTINQLVRQGREVEKIKSKSPAMENSPQRRGVCTRVYTTTPKKPNSALRKVAKVRLTNGSEVISYIGGEGHNLQEHSVVLVRGGRVKDLPGVRYHIVRGSLDLQGVKDRKQARSKYGAKKPKAK.

Residues 9-31 (RQGREVEKIKSKSPAMENSPQRR) form a disordered region. Position 89 is a 3-methylthioaspartic acid (Asp89).

It belongs to the universal ribosomal protein uS12 family. Part of the 30S ribosomal subunit. Contacts proteins S8 and S17. May interact with IF1 in the 30S initiation complex.

With S4 and S5 plays an important role in translational accuracy. Its function is as follows. Interacts with and stabilizes bases of the 16S rRNA that are involved in tRNA selection in the A site and with the mRNA backbone. Located at the interface of the 30S and 50S subunits, it traverses the body of the 30S subunit contacting proteins on the other side and probably holding the rRNA structure together. The combined cluster of proteins S8, S12 and S17 appears to hold together the shoulder and platform of the 30S subunit. The chain is Small ribosomal subunit protein uS12 from Verminephrobacter eiseniae (strain EF01-2).